The sequence spans 525 residues: Penton protein (525 aa).

The segment at 1–47 is disordered; the sequence is MWGLQPPTSIPPPPPPTELTPSTYPAMVNGYPPPAASAQSCSSSGGQ. The segment covering 8-18 has biased composition (pro residues); the sequence is TSIPPPPPPTE. The segment covering 36–47 has biased composition (low complexity); sequence ASAQSCSSSGGQ.

It belongs to the adenoviridae penton family. As to quaternary structure, interacts with the fiber protein (via N-terminal tail region). Interacts with the capsid vertex protein; this interaction binds the penton base to neighboring peripentonal hexons.

The protein localises to the virion. It localises to the host nucleus. In terms of biological role, major capsid protein that self-associates to form penton base pentamers, each in the shape of a pentagon, situated at the 12 vertices of the pseudo T=25 capsid. Involved in virus secondary attachment to host cell after initial attachment by the fiber protein, and in endocytosis of virions. As the virus enters the host cell, penton proteins are shed concomitant with virion acidification in the endosome. This is Penton protein from Galliformes (FAdV-10).